We begin with the raw amino-acid sequence, 347 residues long: Ribosomal RNA small subunit methyltransferase C (347 aa).

Belongs to the methyltransferase superfamily. RsmC family. Monomer.

It is found in the cytoplasm. It catalyses the reaction guanosine(1207) in 16S rRNA + S-adenosyl-L-methionine = N(2)-methylguanosine(1207) in 16S rRNA + S-adenosyl-L-homocysteine + H(+). Its function is as follows. Specifically methylates the guanine in position 1207 of 16S rRNA in the 30S particle. The polypeptide is Ribosomal RNA small subunit methyltransferase C (Yersinia pseudotuberculosis serotype IB (strain PB1/+)).